The sequence spans 261 residues: Syntaxin-7 (261 aa).

Serine 2 bears the N-acetylserine mark. At 2–238 (SYTPGVGGDP…DYQRKSRKTL (237 aa)) the chain is on the cytoplasmic side. The residue at position 4 (threonine 4) is a Phosphothreonine. A Phosphoserine modification is found at serine 45. A coiled-coil region spans residues 47 to 69 (ELRQQLQQKQQYTNQLTKETDKY). Serine 75 bears the Phosphoserine mark. Residue threonine 79 is modified to Phosphothreonine. Serine 125, serine 126, serine 129, and serine 205 each carry phosphoserine. Positions 129 to 148 (SGSFPEDSSKERNLVSWESQ) are disordered. Positions 165 to 227 (LRLIHERESS…QQANQQLSRA (63 aa)) constitute a t-SNARE coiled-coil homology domain. Residues 239–259 (CIIILILVIGVVIIGLIIWGL) form a helical; Anchor for type IV membrane protein membrane-spanning segment. The Vesicular portion of the chain corresponds to 260 to 261 (NR).

Belongs to the syntaxin family. In terms of assembly, forms a SNARE complex with VTI1B, STX8 and VAMP8 which functions in the homotypic fusion of late endosomes. Component of the SNARE complex composed of STX7, STX8, VAMP7 and VTI1B that is required for heterotypic fusion of late endosomes with lysosomes. Interacts with VPS11, VPS16 and VPS18. Interacts with VPS33A. Interacts with TPC1.

It localises to the early endosome membrane. In terms of biological role, may be involved in protein trafficking from the plasma membrane to the early endosome (EE) as well as in homotypic fusion of endocytic organelles. Mediates the endocytic trafficking from early endosomes to late endosomes and lysosomes. The protein is Syntaxin-7 (STX7) of Pongo abelii (Sumatran orangutan).